A 154-amino-acid chain; its full sequence is MMRLSFNEEEVERAMNLYRVFARAFKSVSEHSIRDSKEHGFNPTEFAVLELLYTRGPQKLQQIGSRLLLVSGNVTYVIDKLERNGFLVREQDPKDKRSVYAHLTDKGNEYLDKIYPIHALRIARAFSGLSPDEQDQLIVLLKKAGIHSQHLLFR.

One can recognise an HTH marR-type domain in the interval 14–146 (AMNLYRVFAR…LIVLLKKAGI (133 aa)). The H-T-H motif DNA-binding region spans 60–83 (LQQIGSRLLLVSGNVTYVIDKLER).

This is an uncharacterized protein from Bacillus subtilis (strain 168).